Here is a 459-residue protein sequence, read N- to C-terminus: Kelch-like protein terF (459 aa).

Kelch repeat units follow at residues 92–144, 145–196, 198–248, 251–304, 306–354, and 355–405; these read STVV…LVGD, EIFV…VVDG, IYYL…TVVV, TIYL…IYRD, LYIL…TIGS, and LIFT…VYKG.

It functions in the pathway secondary metabolite biosynthesis. Kelch-like protein; part of the gene cluster that mediates the biosynthesis of terrein, a fungal metabolite with ecological, antimicrobial, antiproliferative, and antioxidative activities. The first step in the pathway is performed by the polyketide synthase terA that produces 4-hydroxy-6-methylpyranon (4-HMP), orsellinic acid (OA), and 2,3-dehydro-6-hydroxymellein (2,3-dehydro-6-HM) by condensing acetyl-CoA with two, three, or four malonyl-CoA units, respectively. 4-HMP and OA are not pathway intermediates, but are rather shunt or side products. 2,3-dehydro-6-HM is further converted to 6-hydroxymellein (6-HM) by the 6-hydroxymellein synthase terB. The monooxygenases terC and terD, the multicopper oxidase terE and the Kelch-like protein terF are then involved in the transformation of 6-HM to terrein. Even if they are co-regulated with the other terrein cluster genes, terH and terI seem to be dispensable for terrein production; whereas one or both of the 2 transporters terG and terJ are probably required for efficient secretion of metabolites. The protein is Kelch-like protein terF of Aspergillus terreus (strain NIH 2624 / FGSC A1156).